We begin with the raw amino-acid sequence, 746 residues long: Polyribonucleotide nucleotidyltransferase (746 aa).

Positions 493 and 499 each coordinate Mg(2+). One can recognise a KH domain in the interval 560 to 619 (PRIITLQINPEKIGALIGPGGKTIRSITEATGAQIDIEEDGRVYISTADAAAAQQAVAMV). Residues 629–698 (GDIFLGKVVR…GTGKVSLSRR (70 aa)) enclose the S1 motif domain. The segment at 704–746 (ETAEDRRAAGAGRGLRDGGRSSGSERSGDRSPRSDDRPRPRRR) is disordered. Composition is skewed to basic and acidic residues over residues 706-722 (AEDR…RDGG) and 729-746 (RSGD…PRRR).

The protein belongs to the polyribonucleotide nucleotidyltransferase family. Mg(2+) serves as cofactor.

The protein localises to the cytoplasm. The catalysed reaction is RNA(n+1) + phosphate = RNA(n) + a ribonucleoside 5'-diphosphate. Involved in mRNA degradation. Catalyzes the phosphorolysis of single-stranded polyribonucleotides processively in the 3'- to 5'-direction. The sequence is that of Polyribonucleotide nucleotidyltransferase from Roseiflexus castenholzii (strain DSM 13941 / HLO8).